The primary structure comprises 557 residues: Potassium-transporting ATPase potassium-binding subunit (557 aa).

12 helical membrane-spanning segments follow: residues glycine 5–serine 25, leucine 63–glycine 83, glycine 132–isoleucine 152, leucine 170–isoleucine 190, phenylalanine 253–valine 273, leucine 283–valine 303, valine 329–alanine 349, alanine 356–valine 376, glycine 379–glycine 399, leucine 416–methionine 436, leucine 484–alanine 504, and leucine 526–alanine 546.

The protein belongs to the KdpA family. In terms of assembly, the system is composed of three essential subunits: KdpA, KdpB and KdpC.

It is found in the cell inner membrane. Its function is as follows. Part of the high-affinity ATP-driven potassium transport (or Kdp) system, which catalyzes the hydrolysis of ATP coupled with the electrogenic transport of potassium into the cytoplasm. This subunit binds the periplasmic potassium ions and delivers the ions to the membrane domain of KdpB through an intramembrane tunnel. This chain is Potassium-transporting ATPase potassium-binding subunit, found in Shigella boydii serotype 18 (strain CDC 3083-94 / BS512).